The chain runs to 98 residues: uncharacterized protein (98 aa).

Positions alanine 53–valine 98 are disordered.

This is an uncharacterized protein from Mycolicibacterium smegmatis (strain ATCC 700084 / mc(2)155) (Mycobacterium smegmatis).